The chain runs to 564 residues: M protein, serotype 12 (564 aa).

The first 41 residues, 1–41, serve as a signal peptide directing secretion; that stretch reads MAKNTTNRHYSLRKLKTGTASVAVALTVVGAGLVAGQTVRA. The stretch at 44–505 forms a coiled coil; sequence SDLVAEKQRL…RAGKASDSQT (462 aa). 4 C repeats span residues 285 to 319, 327 to 361, 363 to 397, and 405 to 439; these read KQLEEQKQILDASRKGTARDLEAVRQAKKATEAEL, AKVTEQKQILDASRKGTARDLEAVRKSKKQQVEAA, KQLEEQNKISEASRKGLRRDLDTSREAKKQVEKDL, and DKVKEEKQISDASRQGLRRDLDASREAKKQVEKAL. 2 disordered regions span residues 372 to 391 and 404 to 438; these read SEASRKGLRRDLDTSREAKK and LDKVKEEKQISDASRQGLRRDLDASREAKKQVEKA. 2 stretches are compositionally biased toward basic and acidic residues: residues 404–413 and 421–438; these read LDKVKEEKQI and LRRDLDASREAKKQVEKA. 4 D repeats span residues 472-477, 478-483, 486-491, and 493-498; these read AKLEAE, AKALKE, AKQAEE, and AKLRAG. The interval 493-550 is disordered; it reads AKLRAGKASDSQTPDAKPGNKAVPGKGQAPQAGTKPNQNKAPMKETKRQLPSTGETAN. The LPXTG sorting signal signature appears at 542–546; that stretch reads LPSTG. Thr-545 carries the post-translational modification Pentaglycyl murein peptidoglycan amidated threonine. The propeptide at 546–564 is removed by sortase; the sequence is GETANPFFTAAALTVMAAA.

It belongs to the M protein family.

It is found in the secreted. The protein localises to the cell wall. In terms of biological role, this protein is one of the different antigenic serotypes of protein M. Protein M is closely associated with virulence of the bacterium and can render the organism resistant to phagocytosis. The sequence is that of M protein, serotype 12 (emm12) from Streptococcus pyogenes.